Here is a 329-residue protein sequence, read N- to C-terminus: Cathepsin K (329 aa).

An N-terminal signal peptide occupies residues 1-15; sequence MWGLKVLLLPVVSFA. A propeptide spans 16 to 114 (activation peptide); it reads LHPEEILDTQ…TLYIPDWEGR (99 aa). N-linked (GlcNAc...) asparagine glycosylation is present at N103. 2 disulfides stabilise this stretch: C136/C177 and C170/C210. The active site involves C139. N268 carries an N-linked (GlcNAc...) asparagine glycan. An intrachain disulfide couples C269 to C318. Catalysis depends on residues H276 and N296.

This sequence belongs to the peptidase C1 family. Predominantly expressed in osteclasts (bones).

It localises to the lysosome. It is found in the secreted. Its subcellular location is the apical cell membrane. It carries out the reaction Broad proteolytic activity. With small-molecule substrates and inhibitors, the major determinant of specificity is P2, which is preferably Leu, Met &gt; Phe, and not Arg.. In terms of biological role, thiol protease involved in osteoclastic bone resorption and may participate partially in the disorder of bone remodeling. Displays potent endoprotease activity against fibrinogen at acid pH. May play an important role in extracellular matrix degradation. Involved in the release of thyroid hormone thyroxine (T4) by limited proteolysis of TG/thyroglobulin in the thyroid follicle lumen. The protein is Cathepsin K (CTSK) of Oryctolagus cuniculus (Rabbit).